Consider the following 177-residue polypeptide: uncharacterized protein (177 aa).

This is an uncharacterized protein from Schizosaccharomyces pombe (strain 972 / ATCC 24843) (Fission yeast).